A 1001-amino-acid chain; its full sequence is Serine/threonine-protein kinase TAO1-A (1001 aa).

Residues 28–281 (FSDLREIGHG…SDELLKNMFV (254 aa)) enclose the Protein kinase domain. ATP contacts are provided by residues 34–42 (IGHGSFGAV) and Lys-57. The active-site Proton acceptor is Asp-151. Disordered regions lie at residues 324–431 (PAVE…HKSH) and 567–586 (KEEL…EWLS). A compositionally biased stretch (low complexity) spans 350 to 370 (SNQSIPSMSISASSQSSSVTS). Basic and acidic residues-rich tracts occupy residues 375–388 (SDDK…EGDH) and 577–586 (PKKEKQEWLS). 2 coiled-coil regions span residues 458 to 651 (SELR…EHAM) and 754 to 877 (KAVL…EIEA). Positions 911–1001 (SHNPTGGPGP…ISNGSRMSYT (91 aa)) are disordered. Residues 921 to 930 (HWGHPMAGPP) show a composition bias toward low complexity. Composition is skewed to polar residues over residues 949 to 967 (GSVQ…NSPQ) and 974 to 1001 (SGGQ…MSYT).

This sequence belongs to the protein kinase superfamily. STE Ser/Thr protein kinase family. STE20 subfamily.

It localises to the cytoplasm. The enzyme catalyses L-seryl-[protein] + ATP = O-phospho-L-seryl-[protein] + ADP + H(+). The catalysed reaction is L-threonyl-[protein] + ATP = O-phospho-L-threonyl-[protein] + ADP + H(+). Functionally, serine/threonine-protein kinase involved in various processes such as p38/mapk14 stress-activated MAPK cascade, DNA damage response and regulation of cytoskeleton stability. Acts as an activator of the p38/MAPK14 stress-activated MAPK cascade by mediating phosphorylation and subsequent activation of upstream MAP kinase kinases. In response to DNA damage, involved in the G2/M transition DNA damage checkpoint by activating the p38/MAPK14 stress-activated MAPK cascade. This Xenopus laevis (African clawed frog) protein is Serine/threonine-protein kinase TAO1-A (taok1-a).